The primary structure comprises 487 residues: Probable Xaa-Pro aminopeptidase MGYG_06974 (487 aa).

Mn(2+) is bound by residues D255, D266, E414, and E458.

This sequence belongs to the peptidase M24B family. Requires Mn(2+) as cofactor.

The enzyme catalyses Release of any N-terminal amino acid, including proline, that is linked to proline, even from a dipeptide or tripeptide.. Functionally, catalyzes the removal of a penultimate prolyl residue from the N-termini of peptides. This chain is Probable Xaa-Pro aminopeptidase MGYG_06974, found in Arthroderma gypseum (strain ATCC MYA-4604 / CBS 118893) (Microsporum gypseum).